Consider the following 150-residue polypeptide: Bis(5'-adenosyl)-triphosphatase (150 aa).

The 108-residue stretch at Ser-2–Arg-109 folds into the HIT domain. Residues His-8, Asn-27, Gln-83, and Gly-89–Val-92 contribute to the substrate site. Positions His-94–His-98 match the Histidine triad motif motif. The active-site Tele-AMP-histidine intermediate is His-96. Substrate is bound at residue His-98. Tyr-114 is subject to Phosphotyrosine; by SRC. At Tyr-147 the chain carries Phosphotyrosine.

As to quaternary structure, homodimer. Interacts with UBE2I. Interacts with MDM2. Interacts with CTNNB1. Identified in a complex with CTNNB1 and LEF1. In terms of processing, phosphorylation at Tyr-114 by SRC is required for induction of apoptosis. Expressed in heart, brain, lung and skeletal muscle. Particularly strong expression in liver, testis and kidney, where it is confined to the tubular epithelium.

It localises to the cytoplasm. It is found in the nucleus. The protein localises to the mitochondrion. It catalyses the reaction P(1),P(3)-bis(5'-adenosyl) triphosphate + H2O = AMP + ADP + 2 H(+). The catalysed reaction is adenosine 5'-phosphosulfate + H2O = sulfate + AMP + 2 H(+). It carries out the reaction adenosine 5'-phosphosulfate + NH4(+) = adenosine 5'-phosphoramidate + sulfate + 2 H(+). The enzyme catalyses adenosine 5'-phosphoramidate + H2O = AMP + NH4(+). Functionally, possesses dinucleoside triphosphate hydrolase activity. Cleaves P(1)-P(3)-bis(5'-adenosyl) triphosphate (Ap3A) to yield AMP and ADP. Can also hydrolyze P(1)-P(4)-bis(5'-adenosyl) tetraphosphate (Ap4A), but has extremely low activity with ATP. Exhibits adenylylsulfatase activity, hydrolyzing adenosine 5'-phosphosulfate to yield AMP and sulfate. Exhibits adenosine 5'-monophosphoramidase activity, hydrolyzing purine nucleotide phosphoramidates with a single phosphate group such as adenosine 5'monophosphoramidate (AMP-NH2) to yield AMP and NH2. Exhibits adenylylsulfate-ammonia adenylyltransferase, catalyzing the ammonolysis of adenosine 5'-phosphosulfate resulting in the formation of adenosine 5'-phosphoramidate. Also catalyzes the ammonolysis of adenosine 5-phosphorofluoridate and diadenosine triphosphate. Modulates transcriptional activation by CTNNB1 and thereby contributes to regulate the expression of genes essential for cell proliferation and survival, such as CCND1 and BIRC5. Plays a role in the induction of apoptosis via SRC and AKT1 signaling pathways. Inhibits MDM2-mediated proteasomal degradation of p53/TP53 and thereby plays a role in p53/TP53-mediated apoptosis. Induction of apoptosis depends on the ability of FHIT to bind P(1)-P(3)-bis(5'-adenosyl) triphosphate or related compounds, but does not require its catalytic activity. Functions as a tumor suppressor. This chain is Bis(5'-adenosyl)-triphosphatase (Fhit), found in Mus musculus (Mouse).